Reading from the N-terminus, the 38-residue chain is Large ribosomal subunit protein bL36 (38 aa).

The protein belongs to the bacterial ribosomal protein bL36 family.

The chain is Large ribosomal subunit protein bL36 from Roseiflexus castenholzii (strain DSM 13941 / HLO8).